Reading from the N-terminus, the 210-residue chain is Thymidylate kinase (210 aa).

An ATP-binding site is contributed by 10-17; it reads GPEGAGKS.

This sequence belongs to the thymidylate kinase family.

It carries out the reaction dTMP + ATP = dTDP + ADP. In terms of biological role, phosphorylation of dTMP to form dTDP in both de novo and salvage pathways of dTTP synthesis. The polypeptide is Thymidylate kinase (Pseudomonas aeruginosa (strain UCBPP-PA14)).